A 419-amino-acid chain; its full sequence is UDP-N-acetylglucosamine 1-carboxyvinyltransferase 2 (419 aa).

Residue 22 to 23 (KN) coordinates phosphoenolpyruvate. UDP-N-acetyl-alpha-D-glucosamine is bound at residue arginine 92. The active-site Proton donor is the cysteine 116. 2-(S-cysteinyl)pyruvic acid O-phosphothioketal is present on cysteine 116. UDP-N-acetyl-alpha-D-glucosamine contacts are provided by residues 121–125 (RPIDL), aspartate 306, and isoleucine 328.

The protein belongs to the EPSP synthase family. MurA subfamily.

The protein localises to the cytoplasm. The catalysed reaction is phosphoenolpyruvate + UDP-N-acetyl-alpha-D-glucosamine = UDP-N-acetyl-3-O-(1-carboxyvinyl)-alpha-D-glucosamine + phosphate. It functions in the pathway cell wall biogenesis; peptidoglycan biosynthesis. Its function is as follows. Cell wall formation. Adds enolpyruvyl to UDP-N-acetylglucosamine. The chain is UDP-N-acetylglucosamine 1-carboxyvinyltransferase 2 from Streptococcus pyogenes serotype M1.